A 604-amino-acid polypeptide reads, in one-letter code: Elongation factor 4 (604 aa).

The region spanning 8–190 is the tr-type G domain; the sequence is KNKRNFSIIA…AIVHRIPAPN (183 aa). GTP contacts are provided by residues 20–25 and 137–140; these read DHGKST and NKID.

Belongs to the TRAFAC class translation factor GTPase superfamily. Classic translation factor GTPase family. LepA subfamily.

The protein resides in the cell inner membrane. The catalysed reaction is GTP + H2O = GDP + phosphate + H(+). Functionally, required for accurate and efficient protein synthesis under certain stress conditions. May act as a fidelity factor of the translation reaction, by catalyzing a one-codon backward translocation of tRNAs on improperly translocated ribosomes. Back-translocation proceeds from a post-translocation (POST) complex to a pre-translocation (PRE) complex, thus giving elongation factor G a second chance to translocate the tRNAs correctly. Binds to ribosomes in a GTP-dependent manner. This Fusobacterium nucleatum subsp. nucleatum (strain ATCC 25586 / DSM 15643 / BCRC 10681 / CIP 101130 / JCM 8532 / KCTC 2640 / LMG 13131 / VPI 4355) protein is Elongation factor 4.